The sequence spans 91 residues: Large ribosomal subunit protein uL23 (91 aa).

The protein belongs to the universal ribosomal protein uL23 family. As to quaternary structure, part of the 50S ribosomal subunit. Contacts protein L29, and trigger factor when it is bound to the ribosome.

In terms of biological role, one of the early assembly proteins it binds 23S rRNA. One of the proteins that surrounds the polypeptide exit tunnel on the outside of the ribosome. Forms the main docking site for trigger factor binding to the ribosome. The protein is Large ribosomal subunit protein uL23 of Staphylococcus saprophyticus subsp. saprophyticus (strain ATCC 15305 / DSM 20229 / NCIMB 8711 / NCTC 7292 / S-41).